A 405-amino-acid polypeptide reads, in one-letter code: Methylamine dehydrogenase heavy chain (405 aa).

Residues Met1–Ala36 form the signal peptide.

The protein belongs to the aromatic amine dehydrogenase heavy chain family. In terms of assembly, tetramer of two light and two heavy chains.

The protein localises to the periplasm. The enzyme catalyses 2 oxidized [amicyanin] + methylamine + H2O = 2 reduced [amicyanin] + formaldehyde + NH4(+) + 2 H(+). Its function is as follows. Methylamine dehydrogenase carries out the oxidation of methylamine. Electrons are passed from methylamine dehydrogenase to amicyanin. In Methylophilus methylotrophus (Bacterium W3A1), this protein is Methylamine dehydrogenase heavy chain (mauB).